The sequence spans 308 residues: Transaldolase (308 aa).

The active-site Schiff-base intermediate with substrate is K125.

The protein belongs to the transaldolase family. Type 1 subfamily. As to quaternary structure, homodimer.

The protein localises to the cytoplasm. The catalysed reaction is D-sedoheptulose 7-phosphate + D-glyceraldehyde 3-phosphate = D-erythrose 4-phosphate + beta-D-fructose 6-phosphate. Its pathway is carbohydrate degradation; pentose phosphate pathway; D-glyceraldehyde 3-phosphate and beta-D-fructose 6-phosphate from D-ribose 5-phosphate and D-xylulose 5-phosphate (non-oxidative stage): step 2/3. Transaldolase is important for the balance of metabolites in the pentose-phosphate pathway. The polypeptide is Transaldolase (Pseudomonas entomophila (strain L48)).